We begin with the raw amino-acid sequence, 447 residues long: Sporulation protein YpeB (447 aa).

This sequence belongs to the YpeB family.

Functionally, required for spore cortex hydrolysis during germination. Appears to be required for either expression, localization, activation or function of SleB. This is Sporulation protein YpeB from Oceanobacillus iheyensis (strain DSM 14371 / CIP 107618 / JCM 11309 / KCTC 3954 / HTE831).